A 317-amino-acid polypeptide reads, in one-letter code: MIEIKHLKTLQALRNSGSLAAAAAVLHQTQSALSHQFSDLEQRLGFRLFVRKSQPLRFTPQGEVLLQLANQVLPQISRALQACNEPQQTRLRIAIECHSCIQWLTPALENFRASWPQVEMDFTSGVTFDPQPALQQGELDLVMTSDILPRSGLHYSPMFDFEVRLVLAPDHPLASKTQITPEDLASETLLIYPVQRSRLDVWRHFLQPAGISPLLKSVDNTLLLIQMVAARMGIAALPHWVVESVERQGLVVTKTLGDGLWSRLYAAVRDGDQRQAVTEAFIRSTRDHACDHLPFVRSAERPIFDAPTAKPGSQPRL.

The region spanning 1–59 is the HTH lysR-type domain; it reads MIEIKHLKTLQALRNSGSLAAAAAVLHQTQSALSHQFSDLEQRLGFRLFVRKSQPLRFT. A DNA-binding region (H-T-H motif) is located at residues 19–38; the sequence is LAAAAAVLHQTQSALSHQFS.

It belongs to the LysR transcriptional regulatory family.

Its subcellular location is the cytoplasm. Control of the last step in methionine biosynthesis; MetR is a positive activator of the metA, metE and metH genes. It is also a negative regulator of its own expression. The sequence is that of HTH-type transcriptional regulator MetR (metR) from Salmonella typhi.